The chain runs to 914 residues: Coatomer subunit beta' (914 aa).

7 WD repeats span residues 13-54 (SRSD…KDFE), 55-94 (VCDV…KVHS), 97-136 (AHSD…ACQR), 140-180 (GHTH…ANFT), 183-224 (GHEK…CVQT), 227-266 (GHAQ…LETC), and 352-390 (ACEI…NKAF).

Belongs to the WD repeat COPB2 family. Oligomeric complex that consists of at least the alpha, beta, beta', gamma, delta, epsilon and zeta subunits.

It localises to the cytoplasm. Its subcellular location is the golgi apparatus membrane. The protein localises to the cytoplasmic vesicle. It is found in the COPI-coated vesicle membrane. Its function is as follows. The coatomer is a cytosolic protein complex that binds to dilysine motifs and reversibly associates with Golgi non-clathrin-coated vesicles, which further mediate biosynthetic protein transport from the ER, via the Golgi up to the trans Golgi network. Coatomer complex is required for budding from Golgi membranes, and is essential for the retrograde Golgi-to-ER transport of dilysine-tagged proteins. This is Coatomer subunit beta' from Drosophila melanogaster (Fruit fly).